Reading from the N-terminus, the 255-residue chain is Probable transcriptional regulatory protein CMM_1817 (255 aa).

The protein belongs to the TACO1 family.

Its subcellular location is the cytoplasm. In Clavibacter michiganensis subsp. michiganensis (strain NCPPB 382), this protein is Probable transcriptional regulatory protein CMM_1817.